The chain runs to 475 residues: Lipoprotein lipase (475 aa).

The N-terminal stretch at 1 to 27 (MESKALLLLALAVWLQSLTASRGGVAA) is a signal peptide. An interaction with GPIHBP1 region spans residues 32 to 53 (RDFIDIESKFALRTPEDTAEDT). A disulfide bond links cysteine 54 and cysteine 67. Asparagine 70 is a glycosylation site (N-linked (GlcNAc...) asparagine). A 3'-nitrotyrosine modification is found at tyrosine 121. Serine 159 acts as the Nucleophile in catalysis. The active-site Charge relay system is aspartate 183. Tyrosine 191 is subject to 3'-nitrotyrosine. Residues alanine 194, arginine 197, serine 199, and aspartate 202 each coordinate Ca(2+). Residues cysteine 243 and cysteine 266 are joined by a disulfide bond. The interval 243-266 (CNIGEAIRVIAERGLGDVDQLVKC) is essential for determining substrate specificity. The active-site Charge relay system is histidine 268. 2 cysteine pairs are disulfide-bonded: cysteine 291–cysteine 310 and cysteine 302–cysteine 305. The PLAT domain occupies 341–464 (FHYQVKIHFS…KGKAPAVFVK (124 aa)). Tyrosine 343 bears the 3'-nitrotyrosine mark. Asparagine 386 carries an N-linked (GlcNAc...) asparagine glycan. Residues 417–421 (WSDWW) are important for interaction with lipoprotein particles. The tract at residues 430 to 434 (KIRVK) is important for heparin binding. An interaction with GPIHBP1 region spans residues 443 to 467 (IFCSREKVSHLQKGKAPAVFVKCHD). Cysteine 445 and cysteine 465 form a disulfide bridge.

The protein belongs to the AB hydrolase superfamily. Lipase family. As to quaternary structure, homodimer. Interacts with GPIHBP1 with 1:1 stoichiometry. Interacts with APOC2; the interaction activates LPL activity in the presence of lipids. Interaction with heparan sulfate proteoglycans is required to protect LPL against loss of activity. Associates with lipoprotein particles in blood plasma. Interacts with LMF1 and SEL1L; interaction with SEL1L is required to prevent aggregation of newly synthesized LPL in the endoplasmic reticulum (ER), and for normal export of LPL from the ER to the extracellular space. Interacts with SORL1; SORL1 acts as a sorting receptor, promoting LPL localization to endosomes and later to lysosomes, leading to degradation of newly synthesized LPL. In terms of processing, tyrosine nitration after lipopolysaccharide (LPS) challenge down-regulates the lipase activity. In terms of tissue distribution, highest levels in the spinal cord.

It localises to the cell membrane. Its subcellular location is the secreted. The protein resides in the extracellular space. It is found in the extracellular matrix. The catalysed reaction is a triacylglycerol + H2O = a diacylglycerol + a fatty acid + H(+). It carries out the reaction a 1,2-diacyl-sn-glycero-3-phosphocholine + H2O = a 2-acyl-sn-glycero-3-phosphocholine + a fatty acid + H(+). It catalyses the reaction 1,2,3-tri-(9Z-octadecenoyl)-glycerol + H2O = di-(9Z)-octadecenoylglycerol + (9Z)-octadecenoate + H(+). The enzyme catalyses 1,2-di-(9Z-octadecenoyl)-sn-glycero-3-phosphocholine + H2O = (9Z-octadecenoyl)-sn-glycero-3-phosphocholine + (9Z)-octadecenoate + H(+). The catalysed reaction is 1,2,3-tributanoylglycerol + H2O = dibutanoylglycerol + butanoate + H(+). It carries out the reaction 1,2-dihexadecanoyl-sn-glycero-3-phosphocholine + H2O = hexadecanoyl-sn-glycero-3-phosphocholine + hexadecanoate + H(+). Its activity is regulated as follows. The apolipoprotein APOC2 acts as a coactivator of LPL activity. Ca(2+) binding promotes protein stability and formation of the active homodimer. Interaction with GPIHBP1 protects LPL against inactivation by ANGPTL4. Its function is as follows. Key enzyme in triglyceride metabolism. Catalyzes the hydrolysis of triglycerides from circulating chylomicrons and very low density lipoproteins (VLDL), and thereby plays an important role in lipid clearance from the blood stream, lipid utilization and storage. Although it has both phospholipase and triglyceride lipase activities it is primarily a triglyceride lipase with low but detectable phospholipase activity. Mediates margination of triglyceride-rich lipoprotein particles in capillaries. Recruited to its site of action on the luminal surface of vascular endothelium by binding to GPIHBP1 and cell surface heparan sulfate proteoglycans. The sequence is that of Lipoprotein lipase (LPL) from Papio anubis (Olive baboon).